A 445-amino-acid chain; its full sequence is Putative ankyrin repeat protein L797 (445 aa).

ANK repeat units follow at residues 73–102, 285–314, 315–344, and 346–375; these read FMED…DIYS, NHEH…ELVG, NLYI…DIRQ, and LDAF…IINI.

This Acanthamoeba polyphaga (Amoeba) protein is Putative ankyrin repeat protein L797.